We begin with the raw amino-acid sequence, 184 residues long: ATP synthase subunit b, chloroplastic (184 aa).

The chain crosses the membrane as a helical span at residues 27-49 (LATNPINLSVVLGVLIFFGKGVL).

The protein belongs to the ATPase B chain family. F-type ATPases have 2 components, F(1) - the catalytic core - and F(0) - the membrane proton channel. F(1) has five subunits: alpha(3), beta(3), gamma(1), delta(1), epsilon(1). F(0) has four main subunits: a(1), b(1), b'(1) and c(10-14). The alpha and beta chains form an alternating ring which encloses part of the gamma chain. F(1) is attached to F(0) by a central stalk formed by the gamma and epsilon chains, while a peripheral stalk is formed by the delta, b and b' chains.

Its subcellular location is the plastid. It is found in the chloroplast thylakoid membrane. In terms of biological role, f(1)F(0) ATP synthase produces ATP from ADP in the presence of a proton or sodium gradient. F-type ATPases consist of two structural domains, F(1) containing the extramembraneous catalytic core and F(0) containing the membrane proton channel, linked together by a central stalk and a peripheral stalk. During catalysis, ATP synthesis in the catalytic domain of F(1) is coupled via a rotary mechanism of the central stalk subunits to proton translocation. Component of the F(0) channel, it forms part of the peripheral stalk, linking F(1) to F(0). This is ATP synthase subunit b, chloroplastic from Nicotiana tomentosiformis (Tobacco).